A 320-amino-acid polypeptide reads, in one-letter code: MDHPSTSSLPRKKVKAGVKKAGKKTGKKTTGKKKTTPSAIGNRKGKGAACLLVLLAVLSYLAALSLGLYIMTGCISTTAQSNNIYLAELSTNTTYDMSLRVGYFGGCVSVTELTEAPYTGRNSSTQTSTHCVSNLRRKNLDDLSEDLWEPLKLNSSTIQSSLQTFFNTTLPQAKHLQENVFFCEPPLVHLLLFFVTGIMLFVAMTGTSRKRSYRAMLVTAIALSAFSLALALVTVLGSLQSMNALLNTSASGAQRALGDSLYISRGKAMLGVQGALVAIVAVFYLTMGVVFVRRTPEGGAGYIIQAFQNVRGPLKRMGRR.

Residues 1–40 (MDHPSTSSLPRKKVKAGVKKAGKKTGKKTTGKKKTTPSAI) are disordered. The segment covering 10-35 (PRKKVKAGVKKAGKKTGKKTTGKKKT) has biased composition (basic residues). A helical transmembrane segment spans residues 51-71 (LLVLLAVLSYLAALSLGLYIM). Asn92, Asn122, Asn154, and Asn167 each carry an N-linked (GlcNAc...) asparagine glycan. A run of 2 helical transmembrane segments spans residues 186-206 (PLVHLLLFFVTGIMLFVAMTG) and 216-236 (MLVTAIALSAFSLALALVTVL). The N-linked (GlcNAc...) asparagine glycan is linked to Asn247. Residues 272–292 (VQGALVAIVAVFYLTMGVVFV) traverse the membrane as a helical segment.

It localises to the membrane. The protein operates within secondary metabolite biosynthesis; terpenoid biosynthesis. In terms of biological role, part of the gene cluster that mediates the biosynthesis of an ophiobolin family sesterterpenoid. This is an uncharacterized protein from Aspergillus terreus.